We begin with the raw amino-acid sequence, 76 residues long: Acyl carrier protein (76 aa).

The Carrier domain maps to 1-76 (MATFDEVKEV…AAVDYIGSKQ (76 aa)). An O-(pantetheine 4'-phosphoryl)serine modification is found at Ser-36.

This sequence belongs to the acyl carrier protein (ACP) family. 4'-phosphopantetheine is transferred from CoA to a specific serine of apo-ACP by AcpS. This modification is essential for activity because fatty acids are bound in thioester linkage to the sulfhydryl of the prosthetic group.

Its subcellular location is the cytoplasm. Its pathway is lipid metabolism; fatty acid biosynthesis. Its function is as follows. Carrier of the growing fatty acid chain in fatty acid biosynthesis. This is Acyl carrier protein from Deinococcus geothermalis (strain DSM 11300 / CIP 105573 / AG-3a).